Reading from the N-terminus, the 252-residue chain is Chitooligosaccharide deacetylase (252 aa).

Mg(2+)-binding residues include H61 and H125.

This sequence belongs to the YdjC deacetylase family. ChbG subfamily. In terms of assembly, homodimer. Requires Mg(2+) as cofactor.

The protein resides in the cytoplasm. The catalysed reaction is N,N'-diacetylchitobiose + H2O = N-acetyl-beta-D-glucosaminyl-(1-&gt;4)-D-glucosamine + acetate. It catalyses the reaction diacetylchitobiose-6'-phosphate + H2O = N'-monoacetylchitobiose-6'-phosphate + acetate. It participates in glycan degradation; chitin degradation. Functionally, involved in the degradation of chitin. ChbG is essential for growth on the acetylated chitooligosaccharides chitobiose and chitotriose but is dispensable for growth on cellobiose and chitosan dimer, the deacetylated form of chitobiose. Deacetylation of chitobiose-6-P and chitotriose-6-P is necessary for both the activation of the chb promoter by the regulatory protein ChbR and the hydrolysis of phosphorylated beta-glucosides by the phospho-beta-glucosidase ChbF. Catalyzes the removal of only one acetyl group from chitobiose-6-P to yield monoacetylchitobiose-6-P, the inducer of ChbR and the substrate of ChbF. The chain is Chitooligosaccharide deacetylase from Escherichia coli O8 (strain IAI1).